Here is a 231-residue protein sequence, read N- to C-terminus: eRF1 methyltransferase catalytic subunit mtq2 (231 aa).

Residues 54-58 (GCGSG), Asp80, and Asn130 contribute to the S-adenosyl-L-methionine site. 130–133 (NPPY) lines the substrate pocket.

The protein belongs to the eukaryotic/archaeal PrmC-related family. As to quaternary structure, heterodimer of mtq2-trm112. mtq2 is the catalytic subunit carrying the catalytic and the S-adenosyl L-methionine binding sites.

The protein resides in the cytoplasm. It localises to the nucleus. It catalyses the reaction L-glutaminyl-[peptide chain release factor] + S-adenosyl-L-methionine = N(5)-methyl-L-glutaminyl-[peptide chain release factor] + S-adenosyl-L-homocysteine + H(+). Its function is as follows. Methylates eRF1 on 'Gln-182' using S-adenosyl L-methionine as methyl donor. eRF1 needs to be complexed to eRF3 in its GTP-bound form to be efficiently methylated. In Schizosaccharomyces pombe (strain 972 / ATCC 24843) (Fission yeast), this protein is eRF1 methyltransferase catalytic subunit mtq2 (mtq2).